The primary structure comprises 218 residues: Cytochrome c biogenesis ATP-binding export protein CcmA (218 aa).

Positions 12-217 (LHAEQLSSIR…KLSLEYRGEV (206 aa)) constitute an ABC transporter domain. An ATP-binding site is contributed by 44–51 (GPNGAGKS).

The protein belongs to the ABC transporter superfamily. CcmA exporter (TC 3.A.1.107) family. As to quaternary structure, the complex is composed of two ATP-binding proteins (CcmA) and two transmembrane proteins (CcmB).

It localises to the cell inner membrane. The catalysed reaction is heme b(in) + ATP + H2O = heme b(out) + ADP + phosphate + H(+). Part of the ABC transporter complex CcmAB involved in the biogenesis of c-type cytochromes; once thought to export heme, this seems not to be the case, but its exact role is uncertain. Responsible for energy coupling to the transport system. The chain is Cytochrome c biogenesis ATP-binding export protein CcmA from Idiomarina loihiensis (strain ATCC BAA-735 / DSM 15497 / L2-TR).